A 307-amino-acid chain; its full sequence is Alpha N-terminal protein methyltransferase 1 (307 aa).

A compositionally biased stretch (low complexity) spans 38-54 (EPAPAPAAGSNGVAGEQ). The disordered stretch occupies residues 38–60 (EPAPAPAAGSNGVAGEQEAGGGG). Residues glycine 123, arginine 128, 145–147 (EPV), 179–180 (LQ), and glutamine 195 each bind S-adenosyl-L-methionine.

It belongs to the methyltransferase superfamily. NTM1 family.

The catalysed reaction is N-terminal L-alanyl-L-prolyl-L-lysyl-[protein] + 3 S-adenosyl-L-methionine = N-terminal N,N,N-trimethyl-L-alanyl-L-prolyl-L-lysyl-[protein] + 3 S-adenosyl-L-homocysteine + 3 H(+). It catalyses the reaction N-terminal L-seryl-L-prolyl-L-lysyl-[protein] + 3 S-adenosyl-L-methionine = N-terminal N,N,N-trimethyl-L-seryl-L-prolyl-L-lysyl-[protein] + 3 S-adenosyl-L-homocysteine + 3 H(+). The enzyme catalyses N-terminal L-prolyl-L-prolyl-L-lysyl-[protein] + 2 S-adenosyl-L-methionine = N-terminal N,N-dimethyl-L-prolyl-L-prolyl-L-lysyl-[protein] + 2 S-adenosyl-L-homocysteine + 2 H(+). Functionally, alpha-N-methyltransferase that methylates the N-terminus of target proteins containing the N-terminal motif [Ala/Pro/Ser]-Pro-Lys when the initiator Met is cleaved. Specifically catalyzes mono-, di- or tri-methylation of exposed alpha-amino group of Ala or Ser residue in the [Ala/Ser]-Pro-Lys motif and mono- or di-methylation of Pro in the Pro-Pro-Lys motif. The protein is Alpha N-terminal protein methyltransferase 1 of Oryza sativa subsp. indica (Rice).